Reading from the N-terminus, the 984-residue chain is Hyaluronate lyase (984 aa).

Polar residues-rich tracts occupy residues 1 to 12 (MKQVVDNQTQNK), 19 to 32 (DFNQ…SWSH), and 54 to 66 (IQRT…SLSS). Disordered regions lie at residues 1 to 32 (MKQV…SWSH) and 49 to 68 (DKSP…SSDK). Positions 1 to 40 (MKQVVDNQTQNKELVKNGDFNQTNPVSGSWSHTSAREWSA) are cleaved as a signal peptide. Active-site residues include Asn429, His479, and Tyr488. Positions 701–726 (TEKDAKREDTTKEFMSKHSKDAKEKT) are enriched in basic and acidic residues. Positions 701-728 (TEKDAKREDTTKEFMSKHSKDAKEKTGQ) are disordered.

The protein belongs to the polysaccharide lyase 8 family.

It is found in the secreted. The catalysed reaction is [hyaluronan](n) = n 3-(4-deoxy-beta-D-gluc-4-enuronosyl)-N-acetyl-D-glucosamine + H2O. The protein is Hyaluronate lyase of Streptococcus agalactiae serotype III (strain NEM316).